A 122-amino-acid polypeptide reads, in one-letter code: Large ribosomal subunit protein uL14 (122 aa).

The protein belongs to the universal ribosomal protein uL14 family. Part of the 50S ribosomal subunit. Forms a cluster with proteins L3 and L19. In the 70S ribosome, L14 and L19 interact and together make contacts with the 16S rRNA in bridges B5 and B8.

In terms of biological role, binds to 23S rRNA. Forms part of two intersubunit bridges in the 70S ribosome. This is Large ribosomal subunit protein uL14 from Salinispora tropica (strain ATCC BAA-916 / DSM 44818 / JCM 13857 / NBRC 105044 / CNB-440).